The following is a 643-amino-acid chain: Threonine--tRNA ligase (643 aa).

Residues 1 to 61 (MPIITLPDGS…EQDATLEIIT (61 aa)) form the TGS domain. Residues 243–534 (DHRKIGKALD…ITEEYAGFFP (292 aa)) are catalytic. C334, H385, and H511 together coordinate Zn(2+).

It belongs to the class-II aminoacyl-tRNA synthetase family. Homodimer. It depends on Zn(2+) as a cofactor.

Its subcellular location is the cytoplasm. It catalyses the reaction tRNA(Thr) + L-threonine + ATP = L-threonyl-tRNA(Thr) + AMP + diphosphate + H(+). In terms of biological role, catalyzes the attachment of threonine to tRNA(Thr) in a two-step reaction: L-threonine is first activated by ATP to form Thr-AMP and then transferred to the acceptor end of tRNA(Thr). Also edits incorrectly charged L-seryl-tRNA(Thr). The sequence is that of Threonine--tRNA ligase from Haemophilus influenzae (strain 86-028NP).